The primary structure comprises 266 residues: uncharacterized protein (266 aa).

A helical membrane pass occupies residues 13 to 33 (IIGLMLIIFAGILFYAYILQH).

The protein belongs to the LicD transferase family.

The protein resides in the membrane. This is an uncharacterized protein from Rickettsia prowazekii (strain Madrid E).